The sequence spans 257 residues: MPELLNPAPVAHLRHLLRAHSPLVHCMTNDVVQTFTANVLLAVGASPAMVIDPREAAQFAAIADALLINVGTLTEDRAVAMRAAVEHARQAGKPWTLDPVAVGALTVRTAFCHELLALQPAAIRGNASEILALAGMSAGGRGVDTTDTAAAALPAAQALARRLATVVAVTGEVDYVTDGERVLSVAGGNPLMTRVVGTGCALSAVVAASAALPGDRLENVAAACGLMKQAGAIAARQGGPGSFIPAFLDALYQEVQG.

Position 49 (M49) interacts with substrate. Positions 124 and 170 each coordinate ATP. Substrate is bound at residue G197.

Belongs to the Thz kinase family. Requires Mg(2+) as cofactor.

The enzyme catalyses 5-(2-hydroxyethyl)-4-methylthiazole + ATP = 4-methyl-5-(2-phosphooxyethyl)-thiazole + ADP + H(+). It participates in cofactor biosynthesis; thiamine diphosphate biosynthesis; 4-methyl-5-(2-phosphoethyl)-thiazole from 5-(2-hydroxyethyl)-4-methylthiazole: step 1/1. In terms of biological role, catalyzes the phosphorylation of the hydroxyl group of 4-methyl-5-beta-hydroxyethylthiazole (THZ). This Klebsiella pneumoniae subsp. pneumoniae (strain ATCC 700721 / MGH 78578) protein is Hydroxyethylthiazole kinase.